The chain runs to 146 residues: UPF0178 protein Lin1493 (146 aa).

This sequence belongs to the UPF0178 family.

This is UPF0178 protein Lin1493 from Listeria innocua serovar 6a (strain ATCC BAA-680 / CLIP 11262).